A 278-amino-acid chain; its full sequence is Putative B3 domain-containing protein At2g21920 (278 aa).

The segment at residues 168 to 275 is a DNA-binding region (TF-B3); it reads ISKTLSRTDV…KFIILNFEYN (108 aa).

Its subcellular location is the nucleus. This Arabidopsis thaliana (Mouse-ear cress) protein is Putative B3 domain-containing protein At2g21920.